We begin with the raw amino-acid sequence, 542 residues long: CTP synthase (542 aa).

The amidoligase domain stretch occupies residues 1-265 (MTAFIFITGG…GRMLTELLKV (265 aa)). S13 lines the CTP pocket. S13 provides a ligand contact to UTP. Residue 14-19 (SVGKGI) coordinates ATP. An L-glutamine-binding site is contributed by Y54. An ATP-binding site is contributed by D71. The Mg(2+) site is built by D71 and E140. CTP contacts are provided by residues 147 to 149 (DYE), 186 to 191 (KTKPLQ), and K222. UTP contacts are provided by residues 186–191 (KTKPLQ) and K222. Positions 297 to 532 (YVKLRDAYIS…LKAALARKMG (236 aa)) constitute a Glutamine amidotransferase type-1 domain. Residue G352 coordinates L-glutamine. The Nucleophile; for glutamine hydrolysis role is filled by C379. L-glutamine-binding positions include 380–383 (YGMQ), E403, and R460. Active-site residues include H505 and E507.

This sequence belongs to the CTP synthase family. In terms of assembly, homotetramer.

The enzyme catalyses UTP + L-glutamine + ATP + H2O = CTP + L-glutamate + ADP + phosphate + 2 H(+). It carries out the reaction L-glutamine + H2O = L-glutamate + NH4(+). It catalyses the reaction UTP + NH4(+) + ATP = CTP + ADP + phosphate + 2 H(+). The protein operates within pyrimidine metabolism; CTP biosynthesis via de novo pathway; CTP from UDP: step 2/2. Its activity is regulated as follows. Allosterically activated by GTP, when glutamine is the substrate; GTP has no effect on the reaction when ammonia is the substrate. The allosteric effector GTP functions by stabilizing the protein conformation that binds the tetrahedral intermediate(s) formed during glutamine hydrolysis. Inhibited by the product CTP, via allosteric rather than competitive inhibition. Its function is as follows. Catalyzes the ATP-dependent amination of UTP to CTP with either L-glutamine or ammonia as the source of nitrogen. Regulates intracellular CTP levels through interactions with the four ribonucleotide triphosphates. The chain is CTP synthase from Caldivirga maquilingensis (strain ATCC 700844 / DSM 13496 / JCM 10307 / IC-167).